Here is a 391-residue protein sequence, read N- to C-terminus: D-gluconate/D-galactonate dehydratase (391 aa).

Glu-198 provides a ligand contact to Mg(2+). His-200 functions as the Proton donor in the catalytic mechanism. Mg(2+) contacts are provided by Glu-224 and Glu-250. His-300 acts as the Proton acceptor in catalysis.

It belongs to the mandelate racemase/muconate lactonizing enzyme family. GaD subfamily. In terms of assembly, homooctamer. Mg(2+) serves as cofactor.

The enzyme catalyses D-gluconate = 2-dehydro-3-deoxy-D-gluconate + H2O. The catalysed reaction is D-galactonate = 2-dehydro-3-deoxy-D-galactonate + H2O. It functions in the pathway carbohydrate acid metabolism; D-gluconate degradation. In terms of biological role, involved in the degradation of glucose and galactose via the nonphosphorylative variant of Entner-Doudoroff pathway. Catalyzes the dehydration of gluconate to produce 2-keto-3-deoxygluconate (KDG). It is also able to catalyze the dehydration of galactonate to produce 2-keto-3-deoxygalactonate (KDGal). The sequence is that of D-gluconate/D-galactonate dehydratase from Picrophilus torridus (strain ATCC 700027 / DSM 9790 / JCM 10055 / NBRC 100828 / KAW 2/3).